Consider the following 107-residue polypeptide: UPF0145 protein ECA2666 (107 aa).

It belongs to the UPF0145 family.

The polypeptide is UPF0145 protein ECA2666 (Pectobacterium atrosepticum (strain SCRI 1043 / ATCC BAA-672) (Erwinia carotovora subsp. atroseptica)).